The sequence spans 169 residues: Caltractin (169 aa).

A disordered region spans residues 1–24; the sequence is MSYRKTVVSARRDQKKGRVGGLTE. 4 consecutive EF-hand domains span residues 25–60, 61–96, 98–133, and 134–169; these read EQKQEIREAFDLFDTDGSGTIDAKELKVAMRALGFE, PKKEEIKKMIADIDKAGSGTIDFEEFLQMMTSKMGE, DSREEIIKAFKLFDDDNTGFITLKNLKRVAKELGEN, and LTDEELQEMTDEADRNGDGQIDEDEFYRIMKKTSLF. Ca(2+) contacts are provided by Asp38, Asp40, Ser42, Thr44, and Glu49. The Ca(2+) site is built by Asp147, Asn149, Asp151, Gln153, and Glu158.

Belongs to the centrin family.

This calcium-binding protein is found in the basal body complexes (the functional homolog of the centrosome in animal cell). In mitotic cells it is specifically associated with the poles of the mitotic spindles at the sites of the duplicated basal body complexes. This is Caltractin from Dunaliella salina (Green alga).